The sequence spans 199 residues: dTTP/UTP pyrophosphatase (199 aa).

The active-site Proton acceptor is aspartate 76.

The protein belongs to the Maf family. YhdE subfamily. It depends on a divalent metal cation as a cofactor.

It is found in the cytoplasm. It catalyses the reaction dTTP + H2O = dTMP + diphosphate + H(+). It carries out the reaction UTP + H2O = UMP + diphosphate + H(+). In terms of biological role, nucleoside triphosphate pyrophosphatase that hydrolyzes dTTP and UTP. May have a dual role in cell division arrest and in preventing the incorporation of modified nucleotides into cellular nucleic acids. The polypeptide is dTTP/UTP pyrophosphatase (Chlorobaculum parvum (strain DSM 263 / NCIMB 8327) (Chlorobium vibrioforme subsp. thiosulfatophilum)).